The sequence spans 343 residues: Mitochondrial import inner membrane translocase subunit TIM50-A (343 aa).

The Mitochondrial matrix segment spans residues 1–57 (MHKIVWFGTLNKSIGYIGKKKTCLLSPCEKICLNSARKTVQRCDKNYSPPKLRRIKN). Residues 58–77 (FYTYSVVLGSLFSIVMWAIY) traverse the membrane as a helical segment. Residues 78 to 343 (KLGKPEEDHR…GRSLRGSSIK (266 aa)) are Mitochondrial intermembrane-facing. Residues 135–278 (YIQPPYSLVL…FDLTAFLQLI (144 aa)) enclose the FCP1 homology domain.

The protein belongs to the TIM50 family. Component of the TIM23 complex at least composed of Tim23, Tim17 (Tim17a1, Tim17a2 or Tim17b1) and a Tim50. As to expression, exclusively expressed in the testis.

The protein resides in the mitochondrion inner membrane. Its function is as follows. Essential component of the TIM23 complex, a complex that mediates the translocation of transit peptide-containing proteins across the mitochondrial inner membrane. The sequence is that of Mitochondrial import inner membrane translocase subunit TIM50-A (ttm3) from Drosophila melanogaster (Fruit fly).